The primary structure comprises 33 residues: Neutrophil defensin 4 (33 aa).

3 cysteine pairs are disulfide-bonded: Cys3–Cys31, Cys5–Cys20, and Cys10–Cys30.

The protein belongs to the alpha-defensin family. In terms of processing, HANP-2 could be a product of proteolytic N-terminal amino acid removal from HANP-4.

It is found in the secreted. Its function is as follows. Bactericidal activity, greater against Gram-positive bacteria. Low anti-fungi activity. The protein is Neutrophil defensin 4 of Mesocricetus auratus (Golden hamster).